A 303-amino-acid polypeptide reads, in one-letter code: ATP phosphoribosyltransferase (303 aa).

This sequence belongs to the ATP phosphoribosyltransferase family. Long subfamily. Mg(2+) is required as a cofactor.

It is found in the cytoplasm. It carries out the reaction 1-(5-phospho-beta-D-ribosyl)-ATP + diphosphate = 5-phospho-alpha-D-ribose 1-diphosphate + ATP. Its pathway is amino-acid biosynthesis; L-histidine biosynthesis; L-histidine from 5-phospho-alpha-D-ribose 1-diphosphate: step 1/9. Its activity is regulated as follows. Feedback inhibited by histidine. Its function is as follows. Catalyzes the condensation of ATP and 5-phosphoribose 1-diphosphate to form N'-(5'-phosphoribosyl)-ATP (PR-ATP). Has a crucial role in the pathway because the rate of histidine biosynthesis seems to be controlled primarily by regulation of HisG enzymatic activity. This is ATP phosphoribosyltransferase from Haemophilus influenzae (strain 86-028NP).